Consider the following 214-residue polypeptide: Large ribosomal subunit protein uL3 (214 aa).

Positions 136-156 (THGNSLSHRAPGSIGQNQTPG) are disordered. An N5-methylglutamine modification is found at Q153.

Belongs to the universal ribosomal protein uL3 family. Part of the 50S ribosomal subunit. Forms a cluster with proteins L14 and L19. Post-translationally, methylated by PrmB.

Functionally, one of the primary rRNA binding proteins, it binds directly near the 3'-end of the 23S rRNA, where it nucleates assembly of the 50S subunit. This Thioalkalivibrio sulfidiphilus (strain HL-EbGR7) protein is Large ribosomal subunit protein uL3.